We begin with the raw amino-acid sequence, 175 residues long: Shikimate kinase (175 aa).

14-19 (GAGKST) is a binding site for ATP. S18 serves as a coordination point for Mg(2+). Residues D36, R60, and G82 each coordinate substrate. R120 provides a ligand contact to ATP. R140 is a binding site for substrate. Q157 lines the ATP pocket.

It belongs to the shikimate kinase family. In terms of assembly, monomer. Mg(2+) is required as a cofactor.

It localises to the cytoplasm. The catalysed reaction is shikimate + ATP = 3-phosphoshikimate + ADP + H(+). Its pathway is metabolic intermediate biosynthesis; chorismate biosynthesis; chorismate from D-erythrose 4-phosphate and phosphoenolpyruvate: step 5/7. Functionally, catalyzes the specific phosphorylation of the 3-hydroxyl group of shikimic acid using ATP as a cosubstrate. In Mannheimia succiniciproducens (strain KCTC 0769BP / MBEL55E), this protein is Shikimate kinase.